The following is a 463-amino-acid chain: Serine carboxypeptidase-like 32 (463 aa).

A signal peptide spans 1-22; sequence MMNISNVSIALYLCTLFAFVSS. Cystine bridges form between Cys86–Cys345, Cys249–Cys262, and Cys286–Cys313. N-linked (GlcNAc...) asparagine glycosylation occurs at Asn137. Ser179 is a catalytic residue. Residues Asn201 and Asn250 are each glycosylated (N-linked (GlcNAc...) asparagine). N-linked (GlcNAc...) asparagine glycosylation is found at Asn341 and Asn354. Active-site residues include Asp384 and His436.

This sequence belongs to the peptidase S10 family. As to expression, expressed in flowers.

It localises to the secreted. Its function is as follows. Probable carboxypeptidase. This is Serine carboxypeptidase-like 32 (SCPL32) from Arabidopsis thaliana (Mouse-ear cress).